The sequence spans 137 residues: Small ribosomal subunit protein uS12 (137 aa).

The tract at residues 1-43 (MPTINQLVRKGRVSKTKKSDSPALNKGYNSFKKRMTDQNAPQK) is disordered.

It belongs to the universal ribosomal protein uS12 family. In terms of assembly, part of the 30S ribosomal subunit. Contacts proteins S8 and S17. May interact with IF1 in the 30S initiation complex.

With S4 and S5 plays an important role in translational accuracy. In terms of biological role, interacts with and stabilizes bases of the 16S rRNA that are involved in tRNA selection in the A site and with the mRNA backbone. Located at the interface of the 30S and 50S subunits, it traverses the body of the 30S subunit contacting proteins on the other side and probably holding the rRNA structure together. The combined cluster of proteins S8, S12 and S17 appears to hold together the shoulder and platform of the 30S subunit. This Oceanobacillus iheyensis (strain DSM 14371 / CIP 107618 / JCM 11309 / KCTC 3954 / HTE831) protein is Small ribosomal subunit protein uS12.